Consider the following 239-residue polypeptide: Serine protease SplC (239 aa).

The N-terminal stretch at methionine 1–alanine 36 is a signal peptide. Catalysis depends on charge relay system residues histidine 75, aspartate 113, and serine 193.

The protein belongs to the peptidase S1B family.

The protein resides in the secreted. The polypeptide is Serine protease SplC (splC) (Staphylococcus aureus (strain MSSA476)).